We begin with the raw amino-acid sequence, 311 residues long: Urease accessory protein UreD 3 (311 aa).

It belongs to the UreD family. UreD, UreF and UreG form a complex that acts as a GTP-hydrolysis-dependent molecular chaperone, activating the urease apoprotein by helping to assemble the nickel containing metallocenter of UreC. The UreE protein probably delivers the nickel.

Its subcellular location is the cytoplasm. In terms of biological role, required for maturation of urease via the functional incorporation of the urease nickel metallocenter. The chain is Urease accessory protein UreD 3 from Methylorubrum populi (strain ATCC BAA-705 / NCIMB 13946 / BJ001) (Methylobacterium populi).